A 729-amino-acid chain; its full sequence is DNA topoisomerase 3 (729 aa).

The Toprim domain maps to 3-136 (KSVVIAEKPS…IKRLWISSVT (134 aa)). Mg(2+) contacts are provided by glutamate 9 and aspartate 105. A Topo IA-type catalytic domain is found at 153 to 594 (YDNLYASAVA…EMKNYTKEIV (442 aa)). The interval 187-192 (NCGRVQ) is interaction with DNA. Tyrosine 310 serves as the catalytic O-(5'-phospho-DNA)-tyrosine intermediate. Positions 686–713 (ERRKKESGNKADKRDVQKYMKQQKKEEE) are enriched in basic and acidic residues. The interval 686–718 (ERRKKESGNKADKRDVQKYMKQQKKEEEPLNNP) is disordered.

Belongs to the type IA topoisomerase family. Mg(2+) serves as cofactor.

It carries out the reaction ATP-independent breakage of single-stranded DNA, followed by passage and rejoining.. In terms of biological role, releases the supercoiling and torsional tension of DNA, which is introduced during the DNA replication and transcription, by transiently cleaving and rejoining one strand of the DNA duplex. Introduces a single-strand break via transesterification at a target site in duplex DNA. The scissile phosphodiester is attacked by the catalytic tyrosine of the enzyme, resulting in the formation of a DNA-(5'-phosphotyrosyl)-enzyme intermediate and the expulsion of a 3'-OH DNA strand. The free DNA strand then undergoes passage around the unbroken strand, thus removing DNA supercoils. Finally, in the religation step, the DNA 3'-OH attacks the covalent intermediate to expel the active-site tyrosine and restore the DNA phosphodiester backbone. The sequence is that of DNA topoisomerase 3 from Bacillus cereus (strain ATCC 10987 / NRS 248).